The primary structure comprises 370 residues: Spermidine/putrescine import ATP-binding protein PotA (370 aa).

The 231-residue stretch at 11-241 (IELRSITKSY…PKNLFVAKFI (231 aa)) folds into the ABC transporter domain. 43 to 50 (GPSGCGKT) serves as a coordination point for ATP.

It belongs to the ABC transporter superfamily. Spermidine/putrescine importer (TC 3.A.1.11.1) family. As to quaternary structure, the complex is composed of two ATP-binding proteins (PotA), two transmembrane proteins (PotB and PotC) and a solute-binding protein (PotD).

Its subcellular location is the cell inner membrane. It catalyses the reaction ATP + H2O + polyamine-[polyamine-binding protein]Side 1 = ADP + phosphate + polyamineSide 2 + [polyamine-binding protein]Side 1.. Functionally, part of the ABC transporter complex PotABCD involved in spermidine/putrescine import. Responsible for energy coupling to the transport system. In Pasteurella multocida (strain Pm70), this protein is Spermidine/putrescine import ATP-binding protein PotA.